Consider the following 31-residue polypeptide: Cyclotide Hyfl-A (31 aa).

Positions 1 to 31 form a cross-link, cyclopeptide (Ser-Asn); the sequence is SISCGESCVYIPCTVTALVGCTCKDKVCYLN. Intrachain disulfides connect Cys4/Cys21, Cys8/Cys23, and Cys13/Cys28.

This sequence belongs to the cyclotide family. Bracelet subfamily. Post-translationally, this is a cyclic peptide.

Functionally, probably participates in a plant defense mechanism. This Hybanthus floribundus (Greenviolet) protein is Cyclotide Hyfl-A.